The following is a 383-amino-acid chain: MSYTNTKEETQIINIENNDIKKRKFIENNNTNNNTNSNTNSNNKNNNNNNNNKSNNKKQNNNNKKPRLKFTYDYNYKIISPFQKFLDYGICPTLNELYSEFYHILNENKCQKLKMELDELKKMNKGDKPIPIDFDPSKICHQHSKEDIEQIIFDPNDRHLIELAVRKFCGFLQKESNMVLMEMIILSIGLLKSIEFLHFTLEIERDGGIFTTVIPKSSPNTTTTTTSTTTTTTTIINDDNTLITTKDSNEQTSSSSSSSTAITTNTNCSNSKSSSQPITRRRTPGGVFYKLINLHIPTEFKSNLFSISSLFKYKNERKKKGFGTLLDLKDKLLDFTSNNSNGNNDNNENSQEQINSKKFNKLLNEVDEEFDKLCVSSKNEIMT.

Disordered stretches follow at residues 27–66 (ENNNTNNNTNSNTNSNNKNNNNNNNNKSNNKKQNNNNKKP) and 242–281 (LITTKDSNEQTSSSSSSSTAITTNTNCSNSKSSSQPITRR). 2 stretches are compositionally biased toward low complexity: residues 28 to 63 (NNNTNNNTNSNTNSNNKNNNNNNNNKSNNKKQNNNN) and 242 to 275 (LITTKDSNEQTSSSSSSSTAITTNTNCSNSKSSS).

This is an uncharacterized protein from Dictyostelium discoideum (Social amoeba).